Reading from the N-terminus, the 201-residue chain is Small ribosomal subunit protein uS4 (201 aa).

The region spanning 92-155 (RRLDAVVYAL…QKLDIIQESV (64 aa)) is the S4 RNA-binding domain.

This sequence belongs to the universal ribosomal protein uS4 family. In terms of assembly, part of the 30S ribosomal subunit. Contacts protein S5. The interaction surface between S4 and S5 is involved in control of translational fidelity.

Its function is as follows. One of the primary rRNA binding proteins, it binds directly to 16S rRNA where it nucleates assembly of the body of the 30S subunit. In terms of biological role, with S5 and S12 plays an important role in translational accuracy. This is Small ribosomal subunit protein uS4 from Staphylococcus carnosus (strain TM300).